The following is a 416-amino-acid chain: UDP-N-acetylmuramoylalanine--D-glutamate ligase (416 aa).

Position 108 to 114 (108 to 114 (GTTGKTT)) interacts with ATP.

This sequence belongs to the MurCDEF family.

Its subcellular location is the cytoplasm. The enzyme catalyses UDP-N-acetyl-alpha-D-muramoyl-L-alanine + D-glutamate + ATP = UDP-N-acetyl-alpha-D-muramoyl-L-alanyl-D-glutamate + ADP + phosphate + H(+). The protein operates within cell wall biogenesis; peptidoglycan biosynthesis. Its function is as follows. Cell wall formation. Catalyzes the addition of glutamate to the nucleotide precursor UDP-N-acetylmuramoyl-L-alanine (UMA). The chain is UDP-N-acetylmuramoylalanine--D-glutamate ligase from Chlamydia trachomatis serovar L2b (strain UCH-1/proctitis).